A 254-amino-acid chain; its full sequence is Cell wall biogenesis protein NCW2 (254 aa).

The signal sequence occupies residues Met1–Ala17. 3 disordered regions span residues Lys19–Thr57, Thr111–Val143, and Ala167–Lys191. A compositionally biased stretch (low complexity) spans Gln27–Glu42. A compositionally biased stretch (polar residues) spans Ile43–Thr57. Positions Thr111–Thr139 are enriched in low complexity. An N-linked (GlcNAc...) asparagine glycan is attached at Asn229. A lipid anchor (GPI-anchor amidated asparagine) is attached at Asn232. Residues Gly233–Leu254 constitute a propeptide, removed in mature form.

Its subcellular location is the cell membrane. Cell wall biogenesis protein that participates in the organization of the beta-glucan assembly. Involved in the mechanism responsible for cell tolerance to polyhexamethylene biguanide (PHMB), an antifungal agent. In Saccharomyces cerevisiae (strain ATCC 204508 / S288c) (Baker's yeast), this protein is Cell wall biogenesis protein NCW2.